Consider the following 34-residue polypeptide: Trypsin inhibitor 1 (34 aa).

Residues 1–34 (SGSDGGVCPKILQRCRRDSDCPGACICRGNGYCG) constitute a cross-link (cyclopeptide (Ser-Gly)). Disulfide bonds link C8–C25, C15–C27, and C21–C33.

This is a cyclic peptide.

It localises to the secreted. In terms of biological role, inhibits trypsin; probably participates in a plant defense mechanism. This chain is Trypsin inhibitor 1, found in Momordica cochinchinensis (Spiny bitter cucumber).